We begin with the raw amino-acid sequence, 473 residues long: Glutamine synthetase (473 aa).

Residues 18–102 (NNIKWVDLQF…VLTKVFWGGG (85 aa)) enclose the GS beta-grasp domain. Residues 110-473 (PRGIAEEAEK…PMEIYQYLDS (364 aa)) form the GS catalytic domain. Mg(2+)-binding residues include Glu-133 and Glu-135. Glu-207 is an ATP binding site. Residues Glu-212 and Glu-220 each contribute to the Mg(2+) site. L-glutamate-binding positions include 264–265 (NG) and Gly-265. Residue His-269 coordinates Mg(2+). ATP is bound by residues 271–273 (HFS) and Ser-273. L-glutamate contacts are provided by Arg-324, Glu-330, and Arg-342. Positions 342, 347, and 357 each coordinate ATP. Glu-362 contacts Mg(2+). Arg-364 serves as a coordination point for L-glutamate.

It belongs to the glutamine synthetase family. In terms of assembly, oligomer of 12 subunits arranged in the form of two hexagons. Mg(2+) serves as cofactor. The cofactor is Mn(2+).

It localises to the cytoplasm. It carries out the reaction L-glutamate + NH4(+) + ATP = L-glutamine + ADP + phosphate + H(+). Its activity is regulated as follows. Strongly inhibited by glycine and L-alanine. AMP at 10 mM displays a very weak inhibitory effect. The activity of this enzyme is not controlled by adenylation. Functionally, probably involved in nitrogen metabolism via ammonium assimilation. Catalyzes the ATP-dependent biosynthesis of glutamine from glutamate and ammonia. This is Glutamine synthetase from Sulfolobus acidocaldarius (strain ATCC 33909 / DSM 639 / JCM 8929 / NBRC 15157 / NCIMB 11770).